Reading from the N-terminus, the 321-residue chain is Epiphycan (321 aa).

Residues 1-19 (MKALARLIVGLLILDAAVT) form the signal peptide. The O-linked (GalNAc...) threonine glycan is linked to Thr-60. Ser-64 carries an O-linked (Xyl...) (dermatan sulfate) serine glycan. Positions 64-100 (SGNRELLTPPPQPEEAEEEEEEESTPRLIDGSSPQEP) are disordered. Over residues 77-86 (EEAEEEEEEE) the composition is skewed to acidic residues. O-linked (GalNAc...) serine glycosylation occurs at Ser-95. The LRRNT domain maps to 105–142 (VLGPQTNEDFPTCLLCTCISTTVYCDDHELDAIPPLPK). A disulfide bridge connects residues Cys-117 and Cys-129. LRR repeat units follow at residues 143–164 (NTAYFYSRFNRIKKINKNDFAS), 167–188 (DLRRIDLTSNLISEIDEDAFRK), 191–212 (QLRELVLRDNKIRQLPELPTTL), 237–257 (DLHHLYLTDNNLDHIPLPLPE), and 258–279 (NLRALHLQNNNIMEMHEDTFCN). A disulfide bridge links Cys-278 with Cys-311. Asn-282 carries N-linked (GlcNAc...) asparagine glycosylation. The LRR 6 repeat unit spans residues 289–309 (ALEDIRLDGNPINLSKTPQAY).

It belongs to the small leucine-rich proteoglycan (SLRP) family. SLRP class III subfamily. A long and a short form present in approximately equimolar amounts may arise by proteolysis or cleavage by exopeptidases. In terms of processing, the O-linked polysaccharides on Thr-60 and Ser-95 are probably the mucin type linked to GalNAc. There is one glycosaminoglycan chain, known to be dermatan sulfate, and it is probably the O-glycosylation at Ser-64. Preferentially expressed in the zone of flattened chondrocytes of the developing limb cartilage.

It localises to the secreted. It is found in the extracellular space. Its subcellular location is the extracellular matrix. May have a role in bone formation and also in establishing the ordered structure of cartilage through matrix organization. The protein is Epiphycan (EPYC) of Bos taurus (Bovine).